The following is a 189-amino-acid chain: RxLR effector protein CRE18 (189 aa).

The signal sequence occupies residues 1–23; it reads MSKLFYAFAVLAVHVLTSSPTTA. The RxLR-dEER signature appears at 47 to 68; sequence RFLRSIHEGEDSLKPSAFSEER.

The protein belongs to the RxLR effector family.

The protein localises to the secreted. The protein resides in the host cytoplasm. Its subcellular location is the host nucleus. Functionally, effector that is involved in host plant infection. Contributes to virulence during the early infection stage, by inhibiting plant defense responses induced by both PAMP-triggered immunity (PTI) and effector-triggered immunity (ETI). The chain is RxLR effector protein CRE18 from Phytophthora infestans (strain T30-4) (Potato late blight agent).